The primary structure comprises 95 residues: Aspartyl/glutamyl-tRNA(Asn/Gln) amidotransferase subunit C (95 aa).

It belongs to the GatC family. In terms of assembly, heterotrimer of A, B and C subunits.

It catalyses the reaction L-glutamyl-tRNA(Gln) + L-glutamine + ATP + H2O = L-glutaminyl-tRNA(Gln) + L-glutamate + ADP + phosphate + H(+). The enzyme catalyses L-aspartyl-tRNA(Asn) + L-glutamine + ATP + H2O = L-asparaginyl-tRNA(Asn) + L-glutamate + ADP + phosphate + 2 H(+). Its function is as follows. Allows the formation of correctly charged Asn-tRNA(Asn) or Gln-tRNA(Gln) through the transamidation of misacylated Asp-tRNA(Asn) or Glu-tRNA(Gln) in organisms which lack either or both of asparaginyl-tRNA or glutaminyl-tRNA synthetases. The reaction takes place in the presence of glutamine and ATP through an activated phospho-Asp-tRNA(Asn) or phospho-Glu-tRNA(Gln). The sequence is that of Aspartyl/glutamyl-tRNA(Asn/Gln) amidotransferase subunit C from Caulobacter sp. (strain K31).